Reading from the N-terminus, the 229-residue chain is Octanoyltransferase (229 aa).

One can recognise a BPL/LPL catalytic domain in the interval 30 to 223; sequence PDTPDTIWLV…QLQQRAQAHP (194 aa). Substrate contacts are provided by residues 69 to 76, 141 to 143, and 154 to 156; these read RGGQITYH, ALG, and GVS. Cys-172 serves as the catalytic Acyl-thioester intermediate.

It belongs to the LipB family.

The protein resides in the cytoplasm. The catalysed reaction is octanoyl-[ACP] + L-lysyl-[protein] = N(6)-octanoyl-L-lysyl-[protein] + holo-[ACP] + H(+). It participates in protein modification; protein lipoylation via endogenous pathway; protein N(6)-(lipoyl)lysine from octanoyl-[acyl-carrier-protein]: step 1/2. In terms of biological role, catalyzes the transfer of endogenously produced octanoic acid from octanoyl-acyl-carrier-protein onto the lipoyl domains of lipoate-dependent enzymes. Lipoyl-ACP can also act as a substrate although octanoyl-ACP is likely to be the physiological substrate. In Ralstonia pickettii (strain 12J), this protein is Octanoyltransferase.